A 519-amino-acid polypeptide reads, in one-letter code: Probable cytosol aminopeptidase (519 aa).

Positions 283 and 288 each coordinate Mn(2+). Lysine 295 is an active-site residue. The Mn(2+) site is built by aspartate 306, aspartate 365, and glutamate 367. Arginine 369 is an active-site residue.

This sequence belongs to the peptidase M17 family. Mn(2+) is required as a cofactor.

The protein resides in the cytoplasm. The catalysed reaction is Release of an N-terminal amino acid, Xaa-|-Yaa-, in which Xaa is preferably Leu, but may be other amino acids including Pro although not Arg or Lys, and Yaa may be Pro. Amino acid amides and methyl esters are also readily hydrolyzed, but rates on arylamides are exceedingly low.. The enzyme catalyses Release of an N-terminal amino acid, preferentially leucine, but not glutamic or aspartic acids.. In terms of biological role, presumably involved in the processing and regular turnover of intracellular proteins. Catalyzes the removal of unsubstituted N-terminal amino acids from various peptides. The polypeptide is Probable cytosol aminopeptidase (Mycobacterium ulcerans (strain Agy99)).